Consider the following 141-residue polypeptide: ATP synthase epsilon chain (141 aa).

Belongs to the ATPase epsilon chain family. As to quaternary structure, F-type ATPases have 2 components, CF(1) - the catalytic core - and CF(0) - the membrane proton channel. CF(1) has five subunits: alpha(3), beta(3), gamma(1), delta(1), epsilon(1). CF(0) has three main subunits: a, b and c.

It is found in the cell membrane. Its function is as follows. Produces ATP from ADP in the presence of a proton gradient across the membrane. This is ATP synthase epsilon chain from Lactococcus lactis subsp. cremoris (strain SK11).